We begin with the raw amino-acid sequence, 412 residues long: FAD-dependent monooxygenase nscC (412 aa).

The N-terminal stretch at 1 to 21 (MAKPQATVLIIGAGISGLTTS) is a signal peptide. The FAD site is built by E35 and A46. An N-linked (GlcNAc...) asparagine glycan is attached at N92. FAD is bound at residue R119. N170 and N231 each carry an N-linked (GlcNAc...) asparagine glycan. 2 residues coordinate FAD: D326 and G339.

The protein belongs to the paxM FAD-dependent monooxygenase family. The cofactor is FAD.

Its pathway is secondary metabolite biosynthesis. FAD-dependent monooxygenase; part of the gene cluster that mediates the biosynthesis of neosartoricin B, a prenylated anthracenone that probably exhibits T-cell antiproliferative activity, suggestive of a physiological role as an immunosuppressive agent. The non-reducing polyketide synthase nscA probably synthesizes and cyclizes the decaketide backbone. The hydrolase nscB then mediates the product release through hydrolysis followed by spontaneous decarboxylation. The prenyltransferase nscD catalyzes the addition of the dimethylallyl group to the aromatic C5. The FAD-dependent monooxygenase nscC is then responsible for the stereospecific hydroxylation at C2. Neosartoricin B can be converted into two additional compounds neosartoricins C and D. Neosartoricin C is a spirocyclic compound that is cyclized through the attack of C3 hydroxyl on C14, followed by dehydration. On the other hand, neosartoricin D is a further cyclized compound in which attack of C2 on C14 in neosartoricin C results in the formation of the acetal-containing dioxabicyclo-octanone ring. Both of these compounds are novel and possibly represent related metabolites of the gene cluster. The chain is FAD-dependent monooxygenase nscC from Arthroderma otae (strain ATCC MYA-4605 / CBS 113480) (Microsporum canis).